Consider the following 337-residue polypeptide: Phenylalanine--tRNA ligase alpha subunit (337 aa).

Glutamate 258 lines the Mg(2+) pocket.

This sequence belongs to the class-II aminoacyl-tRNA synthetase family. Phe-tRNA synthetase alpha subunit type 1 subfamily. As to quaternary structure, tetramer of two alpha and two beta subunits. The cofactor is Mg(2+).

The protein resides in the cytoplasm. The catalysed reaction is tRNA(Phe) + L-phenylalanine + ATP = L-phenylalanyl-tRNA(Phe) + AMP + diphosphate + H(+). This chain is Phenylalanine--tRNA ligase alpha subunit, found in Burkholderia mallei (strain ATCC 23344).